The primary structure comprises 375 residues: MLRTSTLFTRRVQPSLFSRNILRLQSTAAIPKTQKGVIFYENKGKLHYKDIPVPEPKPNEILINVKYSGVCHTDLHAWHGDWPLPVKLPLVGGHEGAGVVVKLGSNVKGWKVGDLAGIKWLNGSCMTCEFCESGHESNCPDADLSGYTHDGSFQQFATADAIQAAKIQQGTDLAEVAPILCAGVTVYKALKEADLKAGDWVAISGAAGGLGSLAVQYATAMGYRVLGIDAGEEKEKLFKKLGGEVFIDFTKTKNMVSDIQEATKGGPHGVINVSVSEAAISLSTEYVRPCGTVVLVGLPANAYVKSEVFSHVVKSINIKGSYVGNRADTREALDFFSRGLIKSPIKIVGLSELPKVYDLMEKGKILGRYVVDTSK.

The transit peptide at 1–24 (MLRTSTLFTRRVQPSLFSRNILRL) directs the protein to the mitochondrion. Cys-71 provides a ligand contact to Zn(2+). 3 residues coordinate NAD(+): His-72, Thr-73, and His-76. The Zn(2+) site is built by His-94, Glu-95, Cys-125, Cys-128, Cys-131, Cys-139, and Cys-181. NAD(+)-binding residues include Gly-208, Gly-209, Leu-210, Asp-229, Lys-234, Phe-249, Val-296, Ser-321, Val-323, and Arg-368.

Belongs to the zinc-containing alcohol dehydrogenase family. Homotetramer. The cofactor is Zn(2+).

Its subcellular location is the mitochondrion matrix. The protein localises to the mitochondrion inner membrane. The enzyme catalyses a primary alcohol + NAD(+) = an aldehyde + NADH + H(+). The catalysed reaction is a secondary alcohol + NAD(+) = a ketone + NADH + H(+). It carries out the reaction ethanol + NAD(+) = acetaldehyde + NADH + H(+). It catalyses the reaction butan-1-ol + NAD(+) = butanal + NADH + H(+). The enzyme catalyses hexan-1-ol + NAD(+) = hexanal + NADH + H(+). Functionally, mitochondrial isozyme that reduces acetaldehyde to ethanol during the fermentation of glucose. Involved in the shuttling of mitochondrial reducing equivalents to the cytosol, where the redox balance is restored by NADH dehydrogenases on the external side of the mitochondrial inner membrane. Shows a high affinity for alcohols with a double bond conjugated to the alcohol group. This chain is Alcohol dehydrogenase 3, mitochondrial (ADH3), found in Saccharomyces cerevisiae (strain ATCC 204508 / S288c) (Baker's yeast).